We begin with the raw amino-acid sequence, 1245 residues long: Trafficking protein particle complex II-specific subunit 130 homolog (1245 aa).

2 disordered regions span residues 488–524 (GDGS…TSLP) and 884–903 (HVGG…TRKV). Composition is skewed to low complexity over residues 495 to 507 (ANSK…SASN) and 888 to 898 (TDASKTSSSST).

It belongs to the TMEM1 family. Part of the multisubunit TRAPP (transport protein particle) II complex composed of BET3, BET5, TRS20, TRS23, TRS31, TRS33, TRS65, TRS85, TRS120 and TRS130.

Its subcellular location is the golgi apparatus. The protein localises to the trans-Golgi network. It localises to the early endosome. In terms of biological role, specific subunit of the TRAPP II complex, a highly conserved vesicle tethering complex that is required for the proper transport of proteins in post-Golgi trafficking pathways to the growing cell plate in mitotic active cells. The chain is Trafficking protein particle complex II-specific subunit 130 homolog from Oryza sativa subsp. japonica (Rice).